Reading from the N-terminus, the 202-residue chain is Putative pre-16S rRNA nuclease (202 aa).

Disordered regions lie at residues 1–27 (MSGS…GVRI) and 170–202 (GCAA…SDER). The span at 9–20 (GDSRPGDSRPGD) shows a compositional bias: basic and acidic residues.

This sequence belongs to the YqgF nuclease family.

Its subcellular location is the cytoplasm. Its function is as follows. Could be a nuclease involved in processing of the 5'-end of pre-16S rRNA. In Frankia casuarinae (strain DSM 45818 / CECT 9043 / HFP020203 / CcI3), this protein is Putative pre-16S rRNA nuclease.